Consider the following 979-residue polypeptide: Protein argonaute PNH1 (979 aa).

The interval 1-95 (MLEVLDMAPP…GGRAGAGPGP (95 aa)) is disordered. Over residues 54–67 (AETAAATAAVAPPE) the composition is skewed to low complexity. Positions 77-86 (GRRRGGRGRG) are enriched in basic residues. Residues 333 to 446 (PVIEFVAQIL…LPMEACKIVE (114 aa)) form the PAZ domain. One can recognise a Piwi domain in the interval 620-941 (LLLAILPDNN…AAFRARFYME (322 aa)).

Belongs to the argonaute family. Ago subfamily.

It is found in the cytoplasm. Its function is as follows. Probably involved in the RNA silencing pathway. May bind to short RNAs such as microRNAs (miRNAs) or short interfering RNAs (siRNAs), and represses the translation of mRNAs which are complementary to them. Plays a role in the maintenance of the indeterminate state of the stem cells in the shoot apical meristem (SAM). Regulates leaf formation through vascular development and may be involved in determining the central domain of the leaf founder region. This is Protein argonaute PNH1 (PHN1) from Oryza sativa subsp. japonica (Rice).